Here is a 346-residue protein sequence, read N- to C-terminus: Probable electron transfer flavoprotein subunit alpha, mitochondrial (346 aa).

285-313 lines the FAD pocket; the sequence is LYVAIGISGAIQHLAGMKESKMIIAINKD.

It belongs to the ETF alpha-subunit/FixB family. As to quaternary structure, heterodimer of an alpha and a beta subunit. FAD serves as cofactor.

The protein localises to the mitochondrion matrix. Its function is as follows. The electron transfer flavoprotein serves as a specific electron acceptor for several dehydrogenases, including five acyl-CoA dehydrogenases, glutaryl-CoA and sarcosine dehydrogenase. It transfers the electrons to the main mitochondrial respiratory chain via ETF-ubiquinone oxidoreductase (ETF dehydrogenase). This Cryptococcus gattii serotype B (strain WM276 / ATCC MYA-4071) (Filobasidiella gattii) protein is Probable electron transfer flavoprotein subunit alpha, mitochondrial (ETF1).